The sequence spans 74 residues: MSANGAVWGRVRSRLRAFPERLAACGAEAAAYGRCVQASTAPGGRLSKDFCAREFEALRSCFAAAAKKTLEGGC.

Positions 22 to 69 constitute a CHCH domain; sequence LAACGAEAAAYGRCVQASTAPGGRLSKDFCAREFEALRSCFAAAAKKT. 2 consecutive short sequence motifs (cx9C motif) follow at residues 25 to 35 and 51 to 61; these read CGAEAAAYGRC and CAREFEALRSC. Cystine bridges form between C25–C61 and C35–C51.

As to quaternary structure, interacts with NDUFAF5.

It localises to the mitochondrion. Its function is as follows. Involved in the assembly of mitochondrial NADH:ubiquinone oxidoreductase complex (complex I, MT-ND1). Required to stabilize NDUFAF5. The sequence is that of NADH dehydrogenase [ubiquinone] 1 alpha subcomplex assembly factor 8 from Homo sapiens (Human).